A 326-amino-acid chain; its full sequence is Microtubule-associated protein RP/EB family member 2 (326 aa).

At Ser9 the chain carries Phosphoserine. One can recognise a Calponin-homology (CH) domain in the interval 56–158 (TMSRHDIIAW…FIQWFKKFYD (103 aa)). Tyr166 carries the post-translational modification Phosphotyrosine. Disordered regions lie at residues 170 to 239 (EARQ…DKDL) and 297 to 326 (YASD…QEEY). The segment at 186–326 (QIFNLPKKSH…DQQPQQQEEY (141 aa)) is DCTN1-binding. Residues 199-233 (SPTAGAAKSSPAAKPGSTPSRPSSAKRASSSGSAS) show a composition bias toward low complexity. Phosphoserine is present on residues Ser218 and Ser235. In terms of domain architecture, EB1 C-terminal spans 235 to 305 (SDKDLETQVI…LYASDEQEGQ (71 aa)). An APC-binding region spans residues 258–301 (EGVEKERDFYFGKLREIELLCQEHGQENDDLVQRLMEVLYASDE). The segment covering 300-312 (DEQEGQTEEPEVE) has biased composition (acidic residues). Over residues 317-326 (DQQPQQQEEY) the composition is skewed to low complexity.

The protein belongs to the MAPRE family. As to quaternary structure, interacts with DCTN1. Interacts with APC (via C-terminal). Interacts with monomeric and polymerized tubulin. Interacts with SLAIN1. Interacts (via the N-terminal region) with BAG1. Interacts with ASB14. Interacts with HAX1; this interaction is essential for epidermal cell migration. Phosphorylated at Ser-235 by CK2 leading to enhanced cell adhesion. Phosphorylated by CDK1 and AURKB during mitosis reduces the binding affinity of MAPRE2 for microtubules. Post-translationally, ubiquitinated in an ASB14-dependent manner; leading to proteasomal degradation.

The protein localises to the cytoplasm. The protein resides in the cytoskeleton. Adapter protein that is involved in microtubule polymerization, and spindle function by stabilizing microtubules and anchoring them at centrosomes. Therefore, ensures mitotic progression and genome stability. Acts as a central regulator of microtubule reorganization in apico-basal epithelial differentiation. Plays a role during oocyte meiosis by regulating microtubule dynamics. Participates in neurite growth by interacting with plexin B3/PLXNB3 and microtubule reorganization during apico-basal epithelial differentiation. Also plays an essential role for cell migration and focal adhesion dynamics. Mechanistically, recruits HAX1 to microtubules in order to regulate focal adhesion dynamics. This is Microtubule-associated protein RP/EB family member 2 (Mapre2) from Rattus norvegicus (Rat).